The chain runs to 7785 residues: Probable non-canonical nonribosomal peptide synthetase (NRPS) CymA (7785 aa).

3 Carrier domains span residues 487–562, 1908–1983, and 2958–3033; these read TARS…QRQE, HART…SEQQ, and SPGM…LEGG. Residues Ser-522, Ser-1943, and Ser-2993 each carry the O-(pantetheine 4'-phosphoryl)serine modification. The stretch at 3088-3111 is one LRR 1 repeat; it reads RLALADVVVRHEALRTVFAERAGN. 3 Carrier domains span residues 3978 to 4053, 5002 to 5077, and 6389 to 6464; these read APRT…SEQQ, EPRT…LEAN, and GPRD…AQGS. O-(pantetheine 4'-phosphoryl)serine occurs at positions 4013, 5037, and 6424. Residues 6853-6875 form an LRR 2 repeat; that stretch reads TGVSRVDLSVNAIETFDDHGLPA. The Carrier 7 domain occupies 7432-7507; that stretch reads GPRTPQEEIL…QLAEQLGSDG (76 aa). Residue Ser-7467 is modified to O-(pantetheine 4'-phosphoryl)serine.

The cofactor is pantetheine 4'-phosphate.

Its function is as follows. Probable non-canonical nonribosomal peptide synthetase (NRPS); part of the gene cluster that mediates the biosynthesis of cyclic heptapeptides, known as cyclomarins and also of cyclic dipeptides, called cyclomarazines, which have both antimicrobial and cytotoxic effects. First, CymD catalyzes the reverse N-prenylation of monomeric L-tryptophan with dimethylallyl diphosphate (DMAPP) to form N-(1,1-dimethylallyl)-tryptophan (r-N-DMAT). The N-(1,1-dimethylallyl)-tryptophan produced by CymD is then combined with a range of standard and nonproteinogenic amino acid substrates to synthesize the peptides, a process that is probably catalyzed by the non-canonical nonribosomal peptide synthetase (NRPS), CymA. Other proteins in the cluster catalyze further modifications of the peptides including CymV which catalyzes the oxidation of olefinic cyclomarins and cyclomarazines to their respective epoxide derivatives. This is Probable non-canonical nonribosomal peptide synthetase (NRPS) CymA from Salinispora arenicola (strain CNS-205).